Here is a 451-residue protein sequence, read N- to C-terminus: Glyceraldehyde-3-phosphate dehydrogenase B, chloroplastic (451 aa).

The segment at 1–25 is disordered; sequence MATHAALASTRIPTNTRFPSKTSHS. Residues 1–84 constitute a chloroplast transit peptide; the sequence is MATHAALAST…STAVKGVTVA (84 aa). Polar residues predominate over residues 11 to 25; the sequence is RIPTNTRFPSKTSHS. Residues 95 to 96, Asp-119, and Arg-164 each bind NADP(+); that span reads RI. Residues 238 to 240, Thr-269, Arg-284, 297 to 298, and Arg-320 each bind D-glyceraldehyde 3-phosphate; these read SCT and TG. Cys-239 (nucleophile) is an active-site residue. Asn-403 contacts NADP(+).

Belongs to the glyceraldehyde-3-phosphate dehydrogenase family. Tetramer of either four A chains (GAPDH 2) or two A and two B chains (GAPDH 1).

It localises to the plastid. The protein resides in the chloroplast. The enzyme catalyses D-glyceraldehyde 3-phosphate + phosphate + NADP(+) = (2R)-3-phospho-glyceroyl phosphate + NADPH + H(+). Its pathway is carbohydrate biosynthesis; Calvin cycle. The sequence is that of Glyceraldehyde-3-phosphate dehydrogenase B, chloroplastic (GAPB) from Pisum sativum (Garden pea).